The following is a 268-amino-acid chain: MSVLQEIIDGVREDLEPRRRDLPEARLAELVAAAPAPRDAHAALHGGRTDPAGIRVISEVKRASPSKGALAEIPEPATLARAYERGGASAVSVLTEARRFGGSLADLDAVRAAVDLPVLRKDFTVTEYQIHEARAHGADLVLLIVAALDDAELAGFLQLTESLGMHALVEAHTPEEIERGVAAGARILGVNVRNLKTLDVDPARYAALADGLPEDVVRVAESGVESEAQIKAYAAAGADVVLVGEALVRHGAPEEALRAFRAASLTVR.

It belongs to the TrpC family.

The catalysed reaction is 1-(2-carboxyphenylamino)-1-deoxy-D-ribulose 5-phosphate + H(+) = (1S,2R)-1-C-(indol-3-yl)glycerol 3-phosphate + CO2 + H2O. Its pathway is amino-acid biosynthesis; L-tryptophan biosynthesis; L-tryptophan from chorismate: step 4/5. In Micrococcus luteus (strain ATCC 4698 / DSM 20030 / JCM 1464 / CCM 169 / CCUG 5858 / IAM 1056 / NBRC 3333 / NCIMB 9278 / NCTC 2665 / VKM Ac-2230) (Micrococcus lysodeikticus), this protein is Indole-3-glycerol phosphate synthase.